Here is a 270-residue protein sequence, read N- to C-terminus: Protein-ADP-ribose hydrolase (270 aa).

The Macro domain maps to 73 to 267 (VSVKDCQKTN…LYDTYLQKEN (195 aa)). ADP-D-ribose-binding residues include Asp92, Ile93, and Asn106. Residues Cys112, His117, and Cys119 each contribute to the Zn(2+) site. The ADP-D-ribose site is built by Cys119, Ile120, Asp121, Ser212, Thr213, Gly214, Glu215, and Phe216.

This sequence belongs to the MacroD-type family. Zn-Macro subfamily. Zn(2+) is required as a cofactor.

The catalysed reaction is 4-O-(ADP-D-ribosyl)-L-aspartyl-[protein] + H2O = L-aspartyl-[protein] + ADP-D-ribose + H(+). ADP-ribosylhydrolase that specifically reverses the SirTM-mediated mono-ADP-ribosylation at an asparatate residue of GcvH-L, by releasing ADP-ribose from the target protein. May play a role in the regulation of the response to host-induced oxidative stress. The polypeptide is Protein-ADP-ribose hydrolase (Streptococcus pyogenes serotype M18 (strain MGAS8232)).